Here is a 1860-residue protein sequence, read N- to C-terminus: Collagen alpha-1(XXVII) chain (1860 aa).

A signal peptide spans 1-41; sequence MGAGSARGARGTAAAAAARGGGFLFSWILVSFACHLASTQG. A propeptide spans 42 to 624 (N-terminal propeptide); the sequence is APEDVDILQR…AGSTPFPLLM (583 aa). The region spanning 71–236 is the Laminin G-like domain; it reads QSGFIFTQRA…NYCTHLRKQC (166 aa). Residue asparagine 271 is glycosylated (N-linked (GlcNAc...) asparagine). Disordered stretches follow at residues 278 to 608, 625 to 772, and 851 to 1625; these read ALGS…TSSG, GPPG…GSDG, and LKGD…IQLQ. 2 stretches are compositionally biased toward polar residues: residues 298-309 and 386-409; these read TKPQRTSPTNPH and HPTQ…QVPP. Pro residues predominate over residues 432 to 445; sequence MPRPPPPSTRPLPP. 2 stretches are compositionally biased toward low complexity: residues 446 to 457 and 485 to 505; these read TTSSSKKPIPTL and TALS…RPPA. Polar residues predominate over residues 509–518; that stretch reads PPTSGTSTPR. Composition is skewed to low complexity over residues 572 to 588 and 599 to 608; these read TTRP…QTTP and SSSPRPTSSG. 16 Collagen-like domains span residues 625–679, 688–747, 748–807, 808–867, 871–930, 931–990, 1003–1062, 1066–1125, 1126–1185, 1192–1251, 1258–1317, 1318–1378, 1382–1441, 1442–1501, 1502–1561, and 1562–1621; these read GPPG…GDPG, GAKG…PGPV, GDPG…DGNP, GELG…SGDP, GDKG…KGKP, GARG…PGPV, GEPG…RGAK, GPRG…PGTK, GLPG…IGQR, GDSG…QGEK, GAKG…KGIV, GPLG…RGKP, GQPG…EGIA, GPDG…PGQL, GPPG…QGPR, and GPPG…PGGP. A triple-helical region region spans residues 625-1618; it reads GPPGPKGDCG…RGRPGPPGPP (994 aa). A compositionally biased stretch (pro residues) spans 654-669; sequence RGPPGPYGNPGLPGPP. A compositionally biased stretch (low complexity) spans 714 to 734; sequence PGPAGHPGEQGQPGPEGSPGA. Low complexity-rich tracts occupy residues 911–924 and 932–944; these read FPGD…NGPE and ARGL…QLGP. Gly residues predominate over residues 1033–1042; that stretch reads GMPGGMGTPG. Residues 1043–1053 are compositionally biased toward pro residues; the sequence is EPGPQGPPGSR. The segment covering 1130-1142 has biased composition (pro residues); sequence EPGPQGPQGPIGP. Basic and acidic residues-rich tracts occupy residues 1202-1220 and 1241-1253; these read LKGD…EKGQ and PEGK…EKGR. Composition is skewed to basic and acidic residues over residues 1326-1338 and 1350-1360; these read KGEK…DGKA and PVGDRGDRGEP. Positions 1449–1458 are enriched in low complexity; sequence RDGQAGQQGE. Low complexity predominate over residues 1572–1587; it reads IVGPLGILGPSGLPGP. The span at 1603-1620 shows a compositional bias: pro residues; the sequence is RGPPGPRGRPGPPGPPGG. Positions 1622 to 1860 are cleaved as a propeptide — C-terminal propeptide; sequence IQLQQDDLGA…RLEVGPACFL (239 aa). The Fibrillar collagen NC1 domain occupies 1660-1860; it reads GEIFKTLHYL…RLEVGPACFL (201 aa). Cystine bridges form between cysteine 1690–cysteine 1722, cysteine 1731–cysteine 1858, and cysteine 1767–cysteine 1811. Aspartate 1708, asparagine 1710, cysteine 1713, and aspartate 1716 together coordinate Ca(2+). An N-linked (GlcNAc...) asparagine glycan is attached at asparagine 1769.

Belongs to the fibrillar collagen family.

It is found in the secreted. The protein resides in the extracellular space. It localises to the extracellular matrix. Functionally, plays a role during the calcification of cartilage and the transition of cartilage to bone. This is Collagen alpha-1(XXVII) chain (COL27A1) from Homo sapiens (Human).